A 324-amino-acid chain; its full sequence is Olfactory receptor 51D1 (324 aa).

The Extracellular segment spans residues 1-38 (MQKPQLLVPIIATSNGNLVHAAYFLLVGIPGLGPTIHF). A helical membrane pass occupies residues 39 to 59 (WLAFPLCFMYALATLGNLTIV). Topologically, residues 60 to 67 (LIIRVERR) are cytoplasmic. The chain crosses the membrane as a helical span at residues 68–88 (LHEPMYLFLAMLSTIDLVLSS). Residues 89 to 112 (ITMPKMASLFLMGIQEIEFNICLA) lie on the Extracellular side of the membrane. An intrachain disulfide couples cysteine 110 to cysteine 202. Residues 113 to 133 (QMFLIHALSAVESAVLLAMAF) form a helical membrane-spanning segment. Over 134–152 (DRFVAICHPLRHASVLTGC) the chain is Cytoplasmic. The chain crosses the membrane as a helical span at residues 153–173 (TVAKIGLSALTRGFVFFFPLP). The Extracellular portion of the chain corresponds to 174–209 (FILKWLSYCQTHTVTHSFCLHQDIMKLSCTDTRVNV). The helical transmembrane segment at 210-230 (VYGLFIILSVMGVDSLFIGFS) threads the bilayer. Residues 231-250 (YILILWAVLELSSRRAALKA) are Cytoplasmic-facing. The chain crosses the membrane as a helical span at residues 251 to 271 (FNTCISHLCAVLVFYVPLIGL). At 272–285 (SVVHRLGGPTSLLH) the chain is on the extracellular side. The helical transmembrane segment at 286-306 (VVMANTYLLLPPVVNPLVYGA) threads the bilayer. At 307 to 324 (KTKEICSRVLCMFSQGGK) the chain is on the cytoplasmic side.

This sequence belongs to the G-protein coupled receptor 1 family.

It localises to the cell membrane. Its function is as follows. Odorant receptor. In Homo sapiens (Human), this protein is Olfactory receptor 51D1 (OR51D1).